The primary structure comprises 102 residues: Urease subunit beta (102 aa).

It belongs to the urease beta subunit family. Heterotrimer of UreA (gamma), UreB (beta) and UreC (alpha) subunits. Three heterotrimers associate to form the active enzyme.

The protein resides in the cytoplasm. The catalysed reaction is urea + 2 H2O + H(+) = hydrogencarbonate + 2 NH4(+). Its pathway is nitrogen metabolism; urea degradation; CO(2) and NH(3) from urea (urease route): step 1/1. This Acinetobacter baumannii (strain AB307-0294) protein is Urease subunit beta.